A 986-amino-acid polypeptide reads, in one-letter code: Bifunctional glutamine synthetase adenylyltransferase/adenylyl-removing enzyme (986 aa).

The interval 1-475 is adenylyl removase; the sequence is MSFPLAHVDA…VFDHLIGEEK (475 aa). Residues 481 to 986 form an adenylyl transferase region; sequence TETLWHDFLE…LFEHNDKYEE (506 aa).

It belongs to the GlnE family. The cofactor is Mg(2+).

It catalyses the reaction [glutamine synthetase]-O(4)-(5'-adenylyl)-L-tyrosine + phosphate = [glutamine synthetase]-L-tyrosine + ADP. It carries out the reaction [glutamine synthetase]-L-tyrosine + ATP = [glutamine synthetase]-O(4)-(5'-adenylyl)-L-tyrosine + diphosphate. In terms of biological role, involved in the regulation of glutamine synthetase GlnA, a key enzyme in the process to assimilate ammonia. When cellular nitrogen levels are high, the C-terminal adenylyl transferase (AT) inactivates GlnA by covalent transfer of an adenylyl group from ATP to specific tyrosine residue of GlnA, thus reducing its activity. Conversely, when nitrogen levels are low, the N-terminal adenylyl removase (AR) activates GlnA by removing the adenylyl group by phosphorolysis, increasing its activity. The regulatory region of GlnE binds the signal transduction protein PII (GlnB) which indicates the nitrogen status of the cell. The chain is Bifunctional glutamine synthetase adenylyltransferase/adenylyl-removing enzyme from Pasteurella multocida (strain Pm70).